Consider the following 180-residue polypeptide: tRNA (cytidine(56)-2'-O)-methyltransferase (180 aa).

Residues Leu-82, 112 to 116 (GAEKV), and 130 to 137 (VGNQPHSE) each bind S-adenosyl-L-methionine.

It belongs to the aTrm56 family. As to quaternary structure, homodimer.

It is found in the cytoplasm. It carries out the reaction cytidine(56) in tRNA + S-adenosyl-L-methionine = 2'-O-methylcytidine(56) in tRNA + S-adenosyl-L-homocysteine + H(+). Functionally, specifically catalyzes the AdoMet-dependent 2'-O-ribose methylation of cytidine at position 56 in tRNAs. The protein is tRNA (cytidine(56)-2'-O)-methyltransferase of Methanococcus vannielii (strain ATCC 35089 / DSM 1224 / JCM 13029 / OCM 148 / SB).